Consider the following 857-residue polypeptide: Envelope glycoprotein gp160 (857 aa).

The first 26 residues, M1–N26, serve as a signal peptide directing secretion. Topologically, residues Y27–L682 are extracellular. N39 carries an N-linked (GlcNAc...) asparagine; by host glycan. The cysteines at positions 46 and 59 are disulfide-linked. N-linked (GlcNAc...) asparagine; by host glycans are attached at residues N72, N81, N116, N121, N142, N150, N167, N193, N205, N237, N240, N271, N277, N288, N299, N309, N364, N397, N407, N447, N464, and N469. 5 disulfide bridges follow: C103–C213, C110–C204, C115–C164, C226–C256, and C236–C248. Residues C115–D163 are V1. The V2 stretch occupies residues C164–C204. The interval C304 to W336 is V3. An intrachain disulfide couples C304 to C337. 2 cysteine pairs are disulfide-bonded: C389/C446 and C396/C419. The V4 stretch occupies residues C396 to C419. Positions N464–M472 are V5. Positions G515–T535 are fusion peptide. Positions L578 to L594 are immunosuppression. 3 N-linked (GlcNAc...) asparagine; by host glycosylation sites follow: N614, N623, and N639. The stretch at Q627 to Q648 forms a coiled coil. The MPER; binding to GalCer stretch occupies residues K660–R681. A helical membrane pass occupies residues G683–L703. Topologically, residues A704–L857 are cytoplasmic. The short motif at Y710–V713 is the YXXV motif; contains endocytosis signal element. C776 carries the S-palmitoyl cysteine; by host lipid modification. The Di-leucine internalization motif motif lies at L856–L857.

In terms of assembly, the mature envelope protein (Env) consists of a homotrimer of non-covalently associated gp120-gp41 heterodimers. The resulting complex protrudes from the virus surface as a spike. There seems to be as few as 10 spikes on the average virion. Interacts with human CD4, CCR5 and CXCR4, to form a P4HB/PDI-CD4-CXCR4-gp120 complex. Gp120 also interacts with the C-type lectins CD209/DC-SIGN and CLEC4M/DC-SIGNR (collectively referred to as DC-SIGN(R)). Gp120 and gp41 interact with GalCer. As to quaternary structure, the mature envelope protein (Env) consists of a homotrimer of non-covalently associated gp120-gp41 heterodimers. The resulting complex protrudes from the virus surface as a spike. There seems to be as few as 10 spikes on the average virion. In terms of processing, specific enzymatic cleavages in vivo yield mature proteins. Envelope glycoproteins are synthesized as an inactive precursor that is heavily N-glycosylated and processed likely by host cell furin in the Golgi to yield the mature SU and TM proteins. The cleavage site between SU and TM requires the minimal sequence [KR]-X-[KR]-R. Palmitoylation of the transmembrane protein and of Env polyprotein (prior to its proteolytic cleavage) is essential for their association with host cell membrane lipid rafts. Palmitoylation is therefore required for envelope trafficking to classical lipid rafts, but not for viral replication.

Its subcellular location is the virion membrane. The protein localises to the host cell membrane. The protein resides in the host endosome membrane. The surface protein gp120 (SU) attaches the virus to the host lymphoid cell by binding to the primary receptor CD4. This interaction induces a structural rearrangement creating a high affinity binding site for a chemokine coreceptor like CXCR4 and/or CCR5. This peculiar 2 stage receptor-interaction strategy allows gp120 to maintain the highly conserved coreceptor-binding site in a cryptic conformation, protected from neutralizing antibodies. Since CD4 also displays a binding site for the disulfide-isomerase P4HB/PDI, a P4HB/PDI-CD4-CXCR4-gp120 complex may form. In that complex, P4HB/PDI could reach and reduce gp120 disulfide bonds, causing major conformational changes in gp120. TXN, another PDI family member could also be involved in disulfide rearrangements in Env during fusion. These changes are transmitted to the transmembrane protein gp41 and are thought to activate its fusogenic potential by unmasking its fusion peptide. Its function is as follows. The surface protein gp120 is a ligand for CD209/DC-SIGN and CLEC4M/DC-SIGNR, which are respectively found on dendritic cells (DCs), and on endothelial cells of liver sinusoids and lymph node sinuses. These interactions allow capture of viral particles at mucosal surfaces by these cells and subsequent transmission to permissive cells. DCs are professional antigen presenting cells, critical for host immunity by inducing specific immune responses against a broad variety of pathogens. They act as sentinels in various tissues where they take up antigen, process it, and present it to T-cells following migration to lymphoid organs. HIV subverts the migration properties of dendritic cells to gain access to CD4+ T-cells in lymph nodes. Virus transmission to permissive T-cells occurs either in trans (without DCs infection, through viral capture and transmission), or in cis (following DCs productive infection, through the usual CD4-gp120 interaction), thereby inducing a robust infection. In trans infection, bound virions remain infectious over days and it is proposed that they are not degraded, but protected in non-lysosomal acidic organelles within the DCs close to the cell membrane thus contributing to the viral infectious potential during DCs' migration from the periphery to the lymphoid tissues. On arrival at lymphoid tissues, intact virions recycle back to DCs' cell surface allowing virus transmission to CD4+ T-cells. Virion capture also seems to lead to MHC-II-restricted viral antigen presentation, and probably to the activation of HIV-specific CD4+ cells. Functionally, the transmembrane protein gp41 (TM) acts as a class I viral fusion protein. Under the current model, the protein has at least 3 conformational states: pre-fusion native state, pre-hairpin intermediate state, and post-fusion hairpin state. During fusion of viral and target intracellular membranes, the coiled coil regions (heptad repeats) assume a trimer-of-hairpins structure, positioning the fusion peptide in close proximity to the C-terminal region of the ectodomain. The formation of this structure appears to drive apposition and subsequent fusion of viral and target cell membranes. Complete fusion occurs in host cell endosomes and is dynamin-dependent, however some lipid transfer might occur at the plasma membrane. The virus undergoes clathrin-dependent internalization long before endosomal fusion, thus minimizing the surface exposure of conserved viral epitopes during fusion and reducing the efficacy of inhibitors targeting these epitopes. Membranes fusion leads to delivery of the nucleocapsid into the cytoplasm. In terms of biological role, the envelope glycoprotein gp160 precursor down-modulates cell surface CD4 antigen by interacting with it in the endoplasmic reticulum and blocking its transport to the cell surface. The gp120-gp41 heterodimer seems to contribute to T-cell depletion during HIV-1 infection. The envelope glycoproteins expressed on the surface of infected cells induce apoptosis through an interaction with uninfected cells expressing the receptor (CD4) and the coreceptors CXCR4 or CCR5. This type of bystander killing may be obtained by at least three distinct mechanisms. First, the interaction between the 2 cells can induce cellular fusion followed by nuclear fusion within the syncytium. Syncytia are condemned to die from apoptosis. Second, the 2 interacting cells may not fuse entirely and simply exchange plasma membrane lipids, after a sort of hemifusion process, followed by rapid death. Third, it is possible that virus-infected cells, on the point of undergoing apoptosis, fuse with CD4-expressing cells, in which case apoptosis is rapidly transmitted from one cell to the other and thus occurs in a sort of contagious fashion. Its function is as follows. The gp120-gp41 heterodimer allows rapid transcytosis of the virus through CD4 negative cells such as simple epithelial monolayers of the intestinal, rectal and endocervical epithelial barriers. Both gp120 and gp41 specifically recognize glycosphingolipids galactosyl-ceramide (GalCer) or 3' sulfo-galactosyl-ceramide (GalS) present in the lipid rafts structures of epithelial cells. Binding to these alternative receptors allows the rapid transcytosis of the virus through the epithelial cells. This transcytotic vesicle-mediated transport of virions from the apical side to the basolateral side of the epithelial cells does not involve infection of the cells themselves. The polypeptide is Envelope glycoprotein gp160 (env) (Homo sapiens (Human)).